Consider the following 121-residue polypeptide: RING-box protein HRT1 (121 aa).

A disordered region spans residues 1-31; that stretch reads MSNEVDRMDVDEDESQNIAQSSNQSAPVETK. At S15 the chain carries Phosphoserine. The segment covering 16 to 26 has biased composition (low complexity); that stretch reads QNIAQSSNQSA. C55, C58, C66, C69, C81, C88, H90, H93, H95, C107, and D110 together coordinate Zn(2+). The RING-type zinc finger occupies 55 to 111; that stretch reads CAICRNHIMEPCIECQPKAMTDTDNECVAAWGVCNHAFHLHCINKWIKTRDACPLDN.

This sequence belongs to the RING-box family. As to quaternary structure, component of multiple cullin-RING ligases (CRLs) composed of 4 subunits: the RING protein HRT1, a cullin, a linker protein, and one of many alternative substrate receptors. Component of SCF E3 ubiquitin ligase complexes containing the cullin CDC53, the linker protein SKP1/CBF3D, and substrate receptors containing F-box motifs like DAS1 or GRR1. Component of RTT101(MMS1) E3 ubiquitin ligase complexes containing the cullin RTT101, the linker protein MMS1, and substrate receptors belonging to a protein family described as DCAF (DDB1- and CUL4-associated factor) like MMS22. Component of CRL3 E3 ubiquitin ligase complexes containing the cullin CUL3, the linker protein ELC1, and substrate receptors containing SOCS-box motifs like ELA1. Interacts with CDC53, CUL3, RTT101, CDC4 and CDC34/UBC3.

It localises to the cytoplasm. Its subcellular location is the nucleus. It participates in protein modification; protein ubiquitination. Its function is as follows. Core component of multiple cullin-RING-based E3 ubiquitin-protein ligase complexes (CRLs), which mediate the ubiquitination of target proteins. Recruits the E2 ubiquitin-conjugating enzyme CDC34/UBC3 to the complex and brings it into close proximity to the substrate. Also stimulates CDC34/UBC3 autoubiquitination and promotes the neddylation of CDC53 and RTT101. Component of the SCF(CDC4) ubiquitin ligase required for ubiquitination of the cyclin-dependent kinase inhibitor SIC1 and for the G1-to-S phase transition. Component of the RTT101(MMS1-MMS22) ubiquitin ligase that promotes fork progression through damaged DNA or natural pause sites. Component of the CRL3(ELA1) ubiquitin ligase required for ubiquitination of RPB1, the largest subunit of RNA polymerase II (Pol II), which targets Pol II for proteasomal degradation in DNA-damaged cells. The protein is RING-box protein HRT1 (HRT1) of Saccharomyces cerevisiae (strain ATCC 204508 / S288c) (Baker's yeast).